A 556-amino-acid polypeptide reads, in one-letter code: Glypican-4 (556 aa).

A signal peptide spans 1-18 (MARFGLPALLCTLAVLSA). Serine 357 carries the phosphoserine modification. 3 O-linked (Xyl...) (glycosaminoglycan) serine glycosylation sites follow: serine 494, serine 498, and serine 500. An N-linked (GlcNAc...) asparagine glycan is attached at asparagine 514. A lipid anchor (GPI-anchor amidated serine) is attached at serine 529. The propeptide at 530–556 (AGVRPGAQAYLLTVFCILFLVMQREWR) is removed in mature form.

This sequence belongs to the glypican family.

It localises to the cell membrane. The protein resides in the secreted. Its subcellular location is the extracellular space. Cell surface proteoglycan that bears heparan sulfate. May be involved in the development of kidney tubules and of the central nervous system. This Homo sapiens (Human) protein is Glypican-4 (GPC4).